We begin with the raw amino-acid sequence, 144 residues long: Nucleoside diphosphate kinase (144 aa).

ATP contacts are provided by Lys11, Phe59, Arg87, Thr93, Arg104, and Asn114. His117 functions as the Pros-phosphohistidine intermediate in the catalytic mechanism.

Belongs to the NDK family. Homotetramer. The cofactor is Mg(2+).

Its subcellular location is the cytoplasm. The catalysed reaction is a 2'-deoxyribonucleoside 5'-diphosphate + ATP = a 2'-deoxyribonucleoside 5'-triphosphate + ADP. The enzyme catalyses a ribonucleoside 5'-diphosphate + ATP = a ribonucleoside 5'-triphosphate + ADP. Major role in the synthesis of nucleoside triphosphates other than ATP. The ATP gamma phosphate is transferred to the NDP beta phosphate via a ping-pong mechanism, using a phosphorylated active-site intermediate. The sequence is that of Nucleoside diphosphate kinase from Vibrio atlanticus (strain LGP32) (Vibrio splendidus (strain Mel32)).